A 135-amino-acid chain; its full sequence is Large ribosomal subunit protein mL41A (135 aa).

The transit peptide at 1–13 (MGLISKIARGLVR) directs the protein to the mitochondrion.

Belongs to the mitochondrion-specific ribosomal protein mL41 family. As to quaternary structure, component of the mitochondrial ribosome large subunit (39S) which comprises a 16S rRNA and about 50 distinct proteins.

It localises to the mitochondrion. In terms of biological role, component of the mitochondrial ribosome large subunit. Also involved in apoptosis and cell cycle. The polypeptide is Large ribosomal subunit protein mL41A (mrpl41-a) (Xenopus laevis (African clawed frog)).